The following is a 470-amino-acid chain: Putative multidrug resistance protein MdtD (470 aa).

Residues Met1–Gln11 lie on the Periplasmic side of the membrane. Residues Leu12–Ala32 traverse the membrane as a helical segment. The Cytoplasmic segment spans residues Leu33–His48. The helical transmembrane segment at Met49 to Ala69 threads the bilayer. Topologically, residues Asp70 to Asn76 are periplasmic. Residues Ile77–Thr97 traverse the membrane as a helical segment. Over Leu98 to Leu101 the chain is Cytoplasmic. A helical transmembrane segment spans residues Val102–Met124. The Periplasmic segment spans residues Lys125 to Thr137. The chain crosses the membrane as a helical span at residues Phe138–Val158. The Cytoplasmic segment spans residues Glu159–His164. Residues Trp165 to Met185 form a helical membrane-spanning segment. At Pro186 to Asp196 the chain is on the periplasmic side. Residues Leu197–Ser217 form a helical membrane-spanning segment. At Lys218 to Pro224 the chain is on the cytoplasmic side. Residues Trp225–Ala245 form a helical membrane-spanning segment. Topologically, residues Lys246–Thr262 are periplasmic. A helical membrane pass occupies residues Phe263 to Met283. Over Thr284 to Pro285 the chain is Cytoplasmic. Residues Val286–Met306 form a helical membrane-spanning segment. The Periplasmic segment spans residues Val307–Ser341. Residues Leu342 to Leu362 form a helical membrane-spanning segment. The Cytoplasmic segment spans residues Gln363–Ser395. A helical membrane pass occupies residues Met396–Phe416. The Periplasmic segment spans residues Gly417–His430. A helical transmembrane segment spans residues Val431–Ala451. Over Arg452 to Leu470 the chain is Cytoplasmic.

Belongs to the major facilitator superfamily. TCR/Tet family.

The protein resides in the cell inner membrane. This chain is Putative multidrug resistance protein MdtD, found in Salmonella typhimurium (strain LT2 / SGSC1412 / ATCC 700720).